Consider the following 359-residue polypeptide: Guanine nucleotide-binding protein subunit alpha-11 (359 aa).

Residues C9 and C10 are each lipidated (S-palmitoyl cysteine). The region spanning 38–359 is the G-alpha domain; that stretch reads RELKLLLLGT…QLNLKEYNLV (322 aa). The G1 motif stretch occupies residues 41–54; that stretch reads KLLLLGTGESGKST. GTP contacts are provided by residues 46–53 and 180–183; these read GTGESGKS and LRVR. Position 53 (S53) interacts with Mg(2+). The segment at 178 to 186 is G2 motif; the sequence is DVLRVRVPT. T186 lines the Mg(2+) pocket. Residues 201 to 210 are G3 motif; the sequence is FRMVDVGGQR. A G4 motif region spans residues 270 to 277; the sequence is ILFLNKKD. GTP is bound by residues 274–277 and A331; that span reads NKKD. Positions 329–334 are G5 motif; that stretch reads TCATDT.

It belongs to the G-alpha family. G(q) subfamily. As to quaternary structure, g proteins are composed of 3 units; alpha, beta and gamma. The alpha chain contains the guanine nucleotide binding site. Interacts with RGS22. Interacts with NTSR1.

Its subcellular location is the cell membrane. The protein resides in the cytoplasm. The enzyme catalyses GTP + H2O = GDP + phosphate + H(+). In terms of biological role, guanine nucleotide-binding proteins (G proteins) function as transducers downstream of G protein-coupled receptors (GPCRs) in numerous signaling cascades. The alpha chain contains the guanine nucleotide binding site and alternates between an active, GTP-bound state and an inactive, GDP-bound state. Signaling by an activated GPCR promotes GDP release and GTP binding. The alpha subunit has a low GTPase activity that converts bound GTP to GDP, thereby terminating the signal. Both GDP release and GTP hydrolysis are modulated by numerous regulatory proteins. Signaling is mediated via phospholipase C-beta-dependent inositol lipid hydrolysis for signal propagation: activates phospholipase C-beta: following GPCR activation, GNA11 activates PLC-beta (PLCB1, PLCB2, PLCB3 or PLCB4), leading to production of diacylglycerol (DAG) and inositol 1,4,5-trisphosphate (IP3). Transduces FFAR4 signaling in response to long-chain fatty acids (LCFAs). Together with GNAQ, required for heart development. In the respiratory epithelium, transmits OXGR1-dependent signals that lead to downstream intracellular Ca(2+) release and mucocilliary clearance of airborne pathogens. The protein is Guanine nucleotide-binding protein subunit alpha-11 (GNA11) of Bos taurus (Bovine).